A 210-amino-acid polypeptide reads, in one-letter code: Ribosomal RNA large subunit methyltransferase E (210 aa).

5 residues coordinate S-adenosyl-L-methionine: Gly-67, Trp-69, Asp-87, Asp-103, and Asp-128. The active-site Proton acceptor is the Lys-168.

The protein belongs to the class I-like SAM-binding methyltransferase superfamily. RNA methyltransferase RlmE family.

It localises to the cytoplasm. It catalyses the reaction uridine(2552) in 23S rRNA + S-adenosyl-L-methionine = 2'-O-methyluridine(2552) in 23S rRNA + S-adenosyl-L-homocysteine + H(+). Its function is as follows. Specifically methylates the uridine in position 2552 of 23S rRNA at the 2'-O position of the ribose in the fully assembled 50S ribosomal subunit. This chain is Ribosomal RNA large subunit methyltransferase E, found in Psychrobacter sp. (strain PRwf-1).